The sequence spans 378 residues: Glutamate 5-kinase 1 (378 aa).

Lys13 provides a ligand contact to ATP. Residues Ser53, Asp140, and Asn152 each contribute to the substrate site. 172-173 (SD) is a binding site for ATP. In terms of domain architecture, PUA spans 278–355 (AGRLTVDAGA…AEIETVLGYE (78 aa)).

This sequence belongs to the glutamate 5-kinase family.

The protein localises to the cytoplasm. The catalysed reaction is L-glutamate + ATP = L-glutamyl 5-phosphate + ADP. It functions in the pathway amino-acid biosynthesis; L-proline biosynthesis; L-glutamate 5-semialdehyde from L-glutamate: step 1/2. Catalyzes the transfer of a phosphate group to glutamate to form L-glutamate 5-phosphate. The sequence is that of Glutamate 5-kinase 1 from Mesorhizobium japonicum (strain LMG 29417 / CECT 9101 / MAFF 303099) (Mesorhizobium loti (strain MAFF 303099)).